The following is a 546-amino-acid chain: Chaperonin GroEL 1 (546 aa).

Residues 30 to 33, Lys-51, 87 to 91, Gly-415, 479 to 481, and Asp-495 each bind ATP; these read TLGP, DGTTT, and NAA.

The protein belongs to the chaperonin (HSP60) family. Forms a cylinder of 14 subunits composed of two heptameric rings stacked back-to-back. Interacts with the co-chaperonin GroES.

It is found in the cytoplasm. It carries out the reaction ATP + H2O + a folded polypeptide = ADP + phosphate + an unfolded polypeptide.. Its function is as follows. Together with its co-chaperonin GroES, plays an essential role in assisting protein folding. The GroEL-GroES system forms a nano-cage that allows encapsulation of the non-native substrate proteins and provides a physical environment optimized to promote and accelerate protein folding. The protein is Chaperonin GroEL 1 of Vibrio vulnificus (strain CMCP6).